We begin with the raw amino-acid sequence, 204 residues long: UPF0228 protein MA_0511 (204 aa).

Belongs to the UPF0228 family.

In Methanosarcina acetivorans (strain ATCC 35395 / DSM 2834 / JCM 12185 / C2A), this protein is UPF0228 protein MA_0511.